The sequence spans 245 residues: Probable 2-phosphosulfolactate phosphatase (245 aa).

The protein belongs to the ComB family. The cofactor is Mg(2+).

It catalyses the reaction (2R)-O-phospho-3-sulfolactate + H2O = (2R)-3-sulfolactate + phosphate. The protein is Probable 2-phosphosulfolactate phosphatase of Trichormus variabilis (strain ATCC 29413 / PCC 7937) (Anabaena variabilis).